We begin with the raw amino-acid sequence, 576 residues long: Protein alan shepard (576 aa).

Positions Met1 to Gln12 are enriched in pro residues. A disordered region spans residues Met1 to Pro66. Tyr5 carries the post-translational modification Phosphotyrosine. Residues Gln13–Gln24 are compositionally biased toward low complexity. Residues Gln25–Met35 are compositionally biased toward gly residues. Residues Gly37–Tyr54 show a composition bias toward polar residues. The segment covering Ser55–Pro66 has biased composition (low complexity). Residues Tyr125 and Tyr142 each carry the phosphotyrosine modification. Residues Pro164–Gly225 form a disordered region. Residues Ser178–Gly225 show a composition bias toward low complexity. 2 RRM domains span residues Thr231 to Gln302 and Thr308 to Gly387. The interval Tyr538–Lys576 is disordered.

In terms of biological role, has a role in the perception of gravity. This chain is Protein alan shepard, found in Drosophila simulans (Fruit fly).